A 102-amino-acid polypeptide reads, in one-letter code: Small ribosomal subunit protein uS10 (102 aa).

A disordered region spans residues 34-61 (MAGPIPLPTKTLKVTTRKSTDGEGSSSF).

This sequence belongs to the universal ribosomal protein uS10 family. In terms of assembly, part of the 30S ribosomal subunit.

Functionally, involved in the binding of tRNA to the ribosomes. This chain is Small ribosomal subunit protein uS10, found in Methanococcus aeolicus (strain ATCC BAA-1280 / DSM 17508 / OCM 812 / Nankai-3).